Consider the following 257-residue polypeptide: Gasdermin-like protein rcd-1-1 (257 aa).

This sequence belongs to the gasdermin family. In terms of assembly, heterooligomer; the heterooligomer with rcd-1-2 forms a ring-shaped pore complex when inserted in the membrane.

The protein resides in the cytoplasm. It localises to the cell membrane. Its function is as follows. Gasdermin-like protein involved in heterokaryon incompatibility, a process that ensures that during spontaneous vegetative cell fusion, only compatible cells from the same colony survive (non-self-recognition). In N.crassa, the rcd-1 locus exists as 2 incompatible alleles, rcd-1-1 (this entry) and rcd-1-2 (AC P0DW10). During the allorecognition process, forms a heterooligomer with rcd-1-2, thereby forming a functional gasdermin-like complex that binds to membranes and forms pores, triggering cell death. Binds negatively charged phospholipids, such as cardiolipin and phosphatidylserine. Also binds to phosphoinositides, preferentially to phosphatidylinositol-3-phosphate (PtdIns-3-P), PtdIns-5-P and PtdIns-3,5-P2. The sequence is that of Gasdermin-like protein rcd-1-1 from Neurospora crassa (strain ATCC 24698 / 74-OR23-1A / CBS 708.71 / DSM 1257 / FGSC 987).